Reading from the N-terminus, the 282-residue chain is Bifunctional protein FolD (282 aa).

NADP(+)-binding positions include 167-169 and Ser-192; that span reads GRS.

The protein belongs to the tetrahydrofolate dehydrogenase/cyclohydrolase family. Homodimer.

It carries out the reaction (6R)-5,10-methylene-5,6,7,8-tetrahydrofolate + NADP(+) = (6R)-5,10-methenyltetrahydrofolate + NADPH. It catalyses the reaction (6R)-5,10-methenyltetrahydrofolate + H2O = (6R)-10-formyltetrahydrofolate + H(+). It participates in one-carbon metabolism; tetrahydrofolate interconversion. Functionally, catalyzes the oxidation of 5,10-methylenetetrahydrofolate to 5,10-methenyltetrahydrofolate and then the hydrolysis of 5,10-methenyltetrahydrofolate to 10-formyltetrahydrofolate. This Acidobacterium capsulatum (strain ATCC 51196 / DSM 11244 / BCRC 80197 / JCM 7670 / NBRC 15755 / NCIMB 13165 / 161) protein is Bifunctional protein FolD.